The sequence spans 166 residues: Salivary acidic proline-rich phosphoprotein 1/2 (166 aa).

An N-terminal signal peptide occupies residues 1–16; that stretch reads MLLILLSVALLAFSSA. The tract at residues 16 to 166 is disordered; that stretch reads AQDLDEDVSQ…QGPPQGQSPQ (151 aa). Q17 carries the pyrrolidone carboxylic acid modification. An inhibits hydroxyapatite formation, binds to hydroxyapatite and calcium region spans residues 17 to 46; sequence QDLDEDVSQEDVPLVISDGGDSEQFIDEER. The residue at position 24 (S24) is a Phosphoserine; by FAM20C. Residue S33 is modified to Phosphoserine; alternate. Residues S33 and S38 are each glycosylated (O-linked (GlcA) serine; alternate). S38 is modified (phosphoserine; by FAM20C; alternate). Composition is skewed to low complexity over residues 48 to 61 and 68 to 82; these read GPPLGGQQSQPSAG and GPQQGPPQQGGQQQQ. Pro residues-rich tracts occupy residues 83-111 and 137-159; these read GPPPPQGKPQGPPQQGGHPPPPQGRPQGP and GPPPPPPGKPQGPPPQGGRPQGP.

In terms of processing, proteolytically cleaved; PRP-2, PRP-1, PIF-S and Db-S yield PRP-4, PRP-3 (protein A), PIF-F and Db-F, respectively. Post-translationally, a hexuronic acid was shown to be linked to Ser-33 in about 40% of the polypeptides. Neither the structure of the carbohydrate (whether glucuronic acid or an isomer of), nor the linkage (whether a glycoside or an ester) has been definitely established.

It is found in the secreted. In terms of biological role, PRP's act as highly potent inhibitors of crystal growth of calcium phosphates. They provide a protective and reparative environment for dental enamel which is important for the integrity of the teeth. The polypeptide is Salivary acidic proline-rich phosphoprotein 1/2 (PRH1) (Homo sapiens (Human)).